A 183-amino-acid chain; its full sequence is A-type ATP synthase subunit E (183 aa).

It belongs to the V-ATPase E subunit family. As to quaternary structure, has multiple subunits with at least A(3), B(3), C, D, E, F, H, I and proteolipid K(x).

It localises to the cell membrane. Its function is as follows. Component of the A-type ATP synthase that produces ATP from ADP in the presence of a proton gradient across the membrane. The protein is A-type ATP synthase subunit E of Methanosarcina acetivorans (strain ATCC 35395 / DSM 2834 / JCM 12185 / C2A).